The primary structure comprises 448 residues: Chromosomal replication initiator protein DnaA 1 (448 aa).

The segment at 1–76 (MLTSETQNVW…FLPVDMSGEP (76 aa)) is domain I, interacts with DnaA modulators. A domain II region spans residues 76-111 (PAIRFIIAPPQKKIIPPNHFSISSSQKEEQSPNSDV). Residues 112-328 (KLNNNYRFEN…GAINRLSAHC (217 aa)) form a domain III, AAA+ region region. Residues G156, G158, K159, and T160 each contribute to the ATP site. Residues 329-448 (RLLDLNITEE…IGMVRRNIES (120 aa)) form a domain IV, binds dsDNA region.

This sequence belongs to the DnaA family. As to quaternary structure, oligomerizes as a right-handed, spiral filament on DNA at oriC.

It localises to the cytoplasm. Its function is as follows. Plays an essential role in the initiation and regulation of chromosomal replication. ATP-DnaA binds to the origin of replication (oriC) to initiate formation of the DNA replication initiation complex once per cell cycle. Binds the DnaA box (a 9 base pair repeat at the origin) and separates the double-stranded (ds)DNA. Forms a right-handed helical filament on oriC DNA; dsDNA binds to the exterior of the filament while single-stranded (ss)DNA is stabiized in the filament's interior. The ATP-DnaA-oriC complex binds and stabilizes one strand of the AT-rich DNA unwinding element (DUE), permitting loading of DNA polymerase. After initiation quickly degrades to an ADP-DnaA complex that is not apt for DNA replication. Binds acidic phospholipids. The protein is Chromosomal replication initiator protein DnaA 1 of Protochlamydia amoebophila (strain UWE25).